The sequence spans 72 residues: Conotoxin Lt6.3 (72 aa).

Residues 1 to 22 (MKLTSVVIVAVLFLAACQLTTS) form the signal peptide. The propeptide occupies 23-46 (DGSRGTWKDRAVRSITKVSMLRWP). Disulfide bonds link Cys-47–Cys-61, Cys-54–Cys-64, and Cys-60–Cys-71.

It belongs to the conotoxin O1 superfamily. In terms of tissue distribution, expressed by the venom duct.

The protein resides in the secreted. The polypeptide is Conotoxin Lt6.3 (Conus litteratus (Lettered cone)).